A 209-amino-acid chain; its full sequence is Probable GTP-binding protein EngB (209 aa).

Residues 12–203 (VSFEIIFVGR…RDRLHEMKRD (192 aa)) form the EngB-type G domain. GTP is bound by residues 20–27 (GRSNVGKS), 45–49 (GVTLR), 62–65 (DMPG), 142–145 (NKMD), and 179–181 (ISA). Residues S27 and T47 each contribute to the Mg(2+) site.

Belongs to the TRAFAC class TrmE-Era-EngA-EngB-Septin-like GTPase superfamily. EngB GTPase family. Requires Mg(2+) as cofactor.

Functionally, necessary for normal cell division and for the maintenance of normal septation. The chain is Probable GTP-binding protein EngB from Methanosarcina barkeri (strain Fusaro / DSM 804).